The chain runs to 261 residues: Carnitinyl-CoA dehydratase (261 aa).

The active-site Nucleophile is the Glu111. The active-site Proton acceptor is Glu131.

It belongs to the enoyl-CoA hydratase/isomerase family.

The catalysed reaction is (R)-carnitinyl-CoA = crotonobetainyl-CoA + H2O. It participates in amine and polyamine metabolism; carnitine metabolism. Its function is as follows. Catalyzes the reversible dehydration of L-carnitinyl-CoA to crotonobetainyl-CoA. The sequence is that of Carnitinyl-CoA dehydratase from Escherichia coli (strain ATCC 8739 / DSM 1576 / NBRC 3972 / NCIMB 8545 / WDCM 00012 / Crooks).